Consider the following 134-residue polypeptide: Large ribosomal subunit protein eL14 (134 aa).

It belongs to the eukaryotic ribosomal protein eL14 family. Component of the large ribosomal subunit (LSU). Mature yeast ribosomes consist of a small (40S) and a large (60S) subunit. The 40S small subunit contains 1 molecule of ribosomal RNA (18S rRNA) and at least 33 different proteins. The large 60S subunit contains 3 rRNA molecules (25S, 5.8S and 5S rRNA) and at least 46 different proteins.

The protein resides in the cytoplasm. The protein localises to the nucleus. Functionally, component of the ribosome, a large ribonucleoprotein complex responsible for the synthesis of proteins in the cell. The small ribosomal subunit (SSU) binds messenger RNAs (mRNAs) and translates the encoded message by selecting cognate aminoacyl-transfer RNA (tRNA) molecules. The large subunit (LSU) contains the ribosomal catalytic site termed the peptidyl transferase center (PTC), which catalyzes the formation of peptide bonds, thereby polymerizing the amino acids delivered by tRNAs into a polypeptide chain. The nascent polypeptides leave the ribosome through a tunnel in the LSU and interact with protein factors that function in enzymatic processing, targeting, and the membrane insertion of nascent chains at the exit of the ribosomal tunnel. This Schizosaccharomyces pombe (strain 972 / ATCC 24843) (Fission yeast) protein is Large ribosomal subunit protein eL14 (rpl14).